A 449-amino-acid chain; its full sequence is UDP-N-acetylmuramoylalanine--D-glutamate ligase (449 aa).

Residue 118-124 (GSNGKTT) participates in ATP binding.

It belongs to the MurCDEF family.

It localises to the cytoplasm. It catalyses the reaction UDP-N-acetyl-alpha-D-muramoyl-L-alanine + D-glutamate + ATP = UDP-N-acetyl-alpha-D-muramoyl-L-alanyl-D-glutamate + ADP + phosphate + H(+). The protein operates within cell wall biogenesis; peptidoglycan biosynthesis. In terms of biological role, cell wall formation. Catalyzes the addition of glutamate to the nucleotide precursor UDP-N-acetylmuramoyl-L-alanine (UMA). This chain is UDP-N-acetylmuramoylalanine--D-glutamate ligase, found in Leuconostoc mesenteroides subsp. mesenteroides (strain ATCC 8293 / DSM 20343 / BCRC 11652 / CCM 1803 / JCM 6124 / NCDO 523 / NBRC 100496 / NCIMB 8023 / NCTC 12954 / NRRL B-1118 / 37Y).